A 497-amino-acid chain; its full sequence is Vacuolar-processing enzyme (497 aa).

The signal sequence occupies residues 1–31 (METHKSLLFFTNYVLFLVFTLSFLPIPGLLA). Residue His180 is part of the active site. The active-site Nucleophile is the Cys222. Cys255 and Cys269 are oxidised to a cystine. N-linked (GlcNAc...) asparagine glycans are attached at residues Asn320 and Asn374. Cystine bridges form between Cys433-Cys463 and Cys445-Cys480.

It belongs to the peptidase C13 family.

Its function is as follows. Asparagine-specific endopeptidase involved in the processing of vacuolar seed protein precursors into the mature forms. In Ricinus communis (Castor bean), this protein is Vacuolar-processing enzyme.